A 629-amino-acid polypeptide reads, in one-letter code: LEAF RUST 10 DISEASE-RESISTANCE LOCUS RECEPTOR-LIKE PROTEIN KINASE-like 1.1 (629 aa).

Positions 1 to 19 are cleaved as a signal peptide; that stretch reads METVSVLLFFFLFLLAAEA. Topologically, residues 20-225 are extracellular; that stretch reads RSTKRTGCKD…PNNYHAEMRL (206 aa). N-linked (GlcNAc...) asparagine glycosylation is found at N56, N92, N123, N124, N172, and N177. The helical transmembrane segment at 226–246 threads the bilayer; the sequence is GLGIGGSVILIIILVALFAVI. At 247–629 the chain is on the cytoplasmic side; sequence HRNYRRKDGS…TTPNTSAYEF (383 aa). The 275-residue stretch at 291–565 folds into the Protein kinase domain; the sequence is FSKDRLLGDG…TMEQVVHELK (275 aa). ATP contacts are provided by residues 297 to 305 and K319; that span reads LGDGGFGTV. Y365 is subject to Phosphotyrosine. The active-site Proton acceptor is D416. Phosphoserine is present on S449. Phosphothreonine is present on residues T450 and T455. Y463 bears the Phosphotyrosine mark. Positions 609–629 are disordered; that stretch reads VSVTDQWTSKSTTPNTSAYEF.

It belongs to the protein kinase superfamily. Ser/Thr protein kinase family.

The protein localises to the cell membrane. It catalyses the reaction L-seryl-[protein] + ATP = O-phospho-L-seryl-[protein] + ADP + H(+). The enzyme catalyses L-threonyl-[protein] + ATP = O-phospho-L-threonyl-[protein] + ADP + H(+). The protein is LEAF RUST 10 DISEASE-RESISTANCE LOCUS RECEPTOR-LIKE PROTEIN KINASE-like 1.1 of Arabidopsis thaliana (Mouse-ear cress).